Here is a 134-residue protein sequence, read N- to C-terminus: Large ribosomal subunit protein bL20 (134 aa).

It belongs to the bacterial ribosomal protein bL20 family.

Functionally, binds directly to 23S ribosomal RNA and is necessary for the in vitro assembly process of the 50S ribosomal subunit. It is not involved in the protein synthesizing functions of that subunit. In Brucella anthropi (strain ATCC 49188 / DSM 6882 / CCUG 24695 / JCM 21032 / LMG 3331 / NBRC 15819 / NCTC 12168 / Alc 37) (Ochrobactrum anthropi), this protein is Large ribosomal subunit protein bL20.